A 219-amino-acid polypeptide reads, in one-letter code: MAVIQDIIAALWQHDFAALANPHVVSVVYFVMFATLFLENGLLPASFLPGDSLLLLAGALIAQDVMHFLPTIGILTAAASLGCWLSYIQGRWLGNTRTVKGWLAQLPAKYHQRATCMFDRHGLLALLAGRFLAFVRTLLPTMAGISGLSNRRFQFFNWLSGLLWVTVVTSFGYALSMIPFVKRHEDQVMTFLMILPVALLVAGLLGTLVVVIKKKYCNA.

Topologically, residues Met1–Ala17 are cytoplasmic. The helical transmembrane segment at Ala18–Leu38 threads the bilayer. At Glu39–His67 the chain is on the periplasmic side. Residues Phe68–Ile88 traverse the membrane as a helical segment. Topologically, residues Gln89–Ser160 are cytoplasmic. A helical transmembrane segment spans residues Gly161 to Val181. At Lys182 to Phe191 the chain is on the periplasmic side. Residues Leu192 to Ile212 form a helical membrane-spanning segment. The Cytoplasmic portion of the chain corresponds to Lys213 to Ala219.

It belongs to the DedA family.

Its subcellular location is the cell inner membrane. The sequence is that of Inner membrane protein YghB (yghB) from Salmonella typhimurium (strain LT2 / SGSC1412 / ATCC 700720).